Consider the following 308-residue polypeptide: HTH-type transcriptional activator AllS (308 aa).

Residues 2-59 (FDPETLRTFIAVAETGSFSKAAERLCKTTATISYRIKLLEENTGVALFFRTTRSVTLT) form the HTH lysR-type domain. The H-T-H motif DNA-binding region spans 19–38 (FSKAAERLCKTTATISYRIK).

It belongs to the LysR transcriptional regulatory family.

Functionally, positive regulator essential for the expression of AllD operon. Binds to the AllD promoter. This Escherichia coli O157:H7 protein is HTH-type transcriptional activator AllS (allS).